The primary structure comprises 639 residues: Chaperone protein DnaK (639 aa).

A Phosphothreonine; by autocatalysis modification is found at Thr199. A compositionally biased stretch (low complexity) spans 602-613 (AQAQQAAAGAEG). Residues 602–639 (AQAQQAAAGAEGQPEDASAKQDDDVVDAEFEEVKDDKK) form a disordered region. Residues 625 to 639 (DVVDAEFEEVKDDKK) show a composition bias toward acidic residues.

This sequence belongs to the heat shock protein 70 family.

Functionally, acts as a chaperone. This Pseudoalteromonas atlantica (strain T6c / ATCC BAA-1087) protein is Chaperone protein DnaK.